The primary structure comprises 326 residues: tRNA-modifying protein YgfZ (326 aa).

W27 and W189 together coordinate folate.

It belongs to the tRNA-modifying YgfZ family.

Its subcellular location is the cytoplasm. In terms of biological role, folate-binding protein involved in regulating the level of ATP-DnaA and in the modification of some tRNAs. It is probably a key factor in regulatory networks that act via tRNA modification, such as initiation of chromosomal replication. In Shigella dysenteriae serotype 1 (strain Sd197), this protein is tRNA-modifying protein YgfZ.